The primary structure comprises 109 residues: UPF0060 membrane protein PCC8801_1733 (109 aa).

4 helical membrane-spanning segments follow: residues 7 to 27, 36 to 56, 58 to 78, and 87 to 107; these read LLYF…VWLW, YALL…LQTA, FGRV…LWGW, and SYDW…MYAP.

Belongs to the UPF0060 family.

The protein resides in the cell inner membrane. In Rippkaea orientalis (strain PCC 8801 / RF-1) (Cyanothece sp. (strain PCC 8801)), this protein is UPF0060 membrane protein PCC8801_1733.